Consider the following 393-residue polypeptide: 1-deoxy-D-xylulose 5-phosphate reductoisomerase (393 aa).

NADPH-binding residues include Thr-13, Gly-14, Ser-15, Ile-16, and Asn-128. Lys-129 lines the 1-deoxy-D-xylulose 5-phosphate pocket. Glu-130 contributes to the NADPH binding site. Position 154 (Asp-154) interacts with Mn(2+). 1-deoxy-D-xylulose 5-phosphate-binding residues include Ser-155, Glu-156, Ser-178, and His-201. Glu-156 contributes to the Mn(2+) binding site. Gly-207 is a binding site for NADPH. Positions 214, 219, 220, and 223 each coordinate 1-deoxy-D-xylulose 5-phosphate. Glu-223 serves as a coordination point for Mn(2+).

The protein belongs to the DXR family. The cofactor is Mg(2+). It depends on Mn(2+) as a cofactor.

The enzyme catalyses 2-C-methyl-D-erythritol 4-phosphate + NADP(+) = 1-deoxy-D-xylulose 5-phosphate + NADPH + H(+). The protein operates within isoprenoid biosynthesis; isopentenyl diphosphate biosynthesis via DXP pathway; isopentenyl diphosphate from 1-deoxy-D-xylulose 5-phosphate: step 1/6. Catalyzes the NADPH-dependent rearrangement and reduction of 1-deoxy-D-xylulose-5-phosphate (DXP) to 2-C-methyl-D-erythritol 4-phosphate (MEP). In Acidithiobacillus ferrooxidans (strain ATCC 23270 / DSM 14882 / CIP 104768 / NCIMB 8455) (Ferrobacillus ferrooxidans (strain ATCC 23270)), this protein is 1-deoxy-D-xylulose 5-phosphate reductoisomerase.